The chain runs to 525 residues: Rho guanine nucleotide exchange factor gef3 (525 aa).

In terms of domain architecture, DH spans 72 to 268 (AIISVLEEFR…EIASQRMNEL (197 aa)).

Its subcellular location is the cytoplasm. Its function is as follows. Has a role in the control of cell polarity and cytokinesis. Involved in bipolar growth and septum formation. The sequence is that of Rho guanine nucleotide exchange factor gef3 (gef3) from Schizosaccharomyces pombe (strain 972 / ATCC 24843) (Fission yeast).